The chain runs to 95 residues: Aspartyl/glutamyl-tRNA(Asn/Gln) amidotransferase subunit C (95 aa).

The protein belongs to the GatC family. Heterotrimer of A, B and C subunits.

It carries out the reaction L-glutamyl-tRNA(Gln) + L-glutamine + ATP + H2O = L-glutaminyl-tRNA(Gln) + L-glutamate + ADP + phosphate + H(+). The catalysed reaction is L-aspartyl-tRNA(Asn) + L-glutamine + ATP + H2O = L-asparaginyl-tRNA(Asn) + L-glutamate + ADP + phosphate + 2 H(+). Allows the formation of correctly charged Asn-tRNA(Asn) or Gln-tRNA(Gln) through the transamidation of misacylated Asp-tRNA(Asn) or Glu-tRNA(Gln) in organisms which lack either or both of asparaginyl-tRNA or glutaminyl-tRNA synthetases. The reaction takes place in the presence of glutamine and ATP through an activated phospho-Asp-tRNA(Asn) or phospho-Glu-tRNA(Gln). This Clostridium botulinum (strain Loch Maree / Type A3) protein is Aspartyl/glutamyl-tRNA(Asn/Gln) amidotransferase subunit C.